The sequence spans 206 residues: Hypoxanthine-guanine phosphoribosyltransferase (206 aa).

Residues 110-118 (DEVDDTRTT), Lys154, and 181-187 (WIMYPWE) each bind GMP. Asp114 acts as the Proton acceptor in catalysis.

The protein belongs to the purine/pyrimidine phosphoribosyltransferase family. In terms of assembly, dimer. The cofactor is Mg(2+).

The protein resides in the endoplasmic reticulum. The catalysed reaction is IMP + diphosphate = hypoxanthine + 5-phospho-alpha-D-ribose 1-diphosphate. The enzyme catalyses GMP + diphosphate = guanine + 5-phospho-alpha-D-ribose 1-diphosphate. In terms of biological role, converts guanine to guanosine monophosphate, and hypoxanthine to inosine monophosphate. Transfers the 5-phosphoribosyl group from 5-phosphoribosylpyrophosphate onto the purine. Plays a central role in the generation of purine nucleotides through the purine salvage pathway. The polypeptide is Hypoxanthine-guanine phosphoribosyltransferase (hpt1) (Schizosaccharomyces pombe (strain 972 / ATCC 24843) (Fission yeast)).